The chain runs to 428 residues: Nucleotidyltransferase MB21D2 (428 aa).

Residues 366-389 form a disordered region; the sequence is QRRGSTTSIPSPQSDGGDPNQPDD. Residues 368–379 are compositionally biased toward polar residues; that stretch reads RGSTTSIPSPQS. Phosphothreonine is present on T372. Phosphoserine is present on residues S373, S376, and S379.

It belongs to the mab-21 family.

Its function is as follows. Probable nucleotidyltransferase that catalyzes the formation of cyclic dinucleotide second messenger in response to some unknown stimulus. This is Nucleotidyltransferase MB21D2 from Mus musculus (Mouse).